The following is a 606-amino-acid chain: Kelch repeat and BTB domain-containing protein 8 (606 aa).

Positions T55–E123 constitute a BTB domain. Residues C158–Q258 form the BACK domain. 5 Kelch repeats span residues E342 to G396, K397 to D447, I449 to D487, S488 to V534, and T546 to A593.

It belongs to the KBTBD8 family. In terms of assembly, component of the BCR(KBTBD8) E3 ubiquitin ligase complex.

It is found in the cytoplasm. The protein resides in the cytoskeleton. It localises to the spindle. The protein localises to the golgi apparatus. Substrate-specific adapter of a BCR (BTB-CUL3-RBX1) E3 ubiquitin ligase complex that acts as a regulator of neural crest specification. The BCR(KBTBD8) complex acts by mediating monoubiquitination of target proteins. This is Kelch repeat and BTB domain-containing protein 8 (kbtbd8) from Xenopus tropicalis (Western clawed frog).